The primary structure comprises 661 residues: Serine/threonine-protein phosphatase rdgC (661 aa).

Residues 7–32 (RAAIFIQKWYRRHQARREMQRRCNWQ) enclose the IQ domain. The tract at residues 105–413 (IDLLIDVFRK…HFVQYISAAS (309 aa)) is catalytic. D158, H160, D187, and N219 together coordinate Mn(2+). H220 serves as the catalytic Proton donor. Mn(2+)-binding residues include H271 and H360. 3 EF-hand domains span residues 441 to 476 (DHRD…VTKL), 526 to 561 (ANKA…LVAH), and 566 to 601 (YSKA…SDLH). Ca(2+) contacts are provided by D539, D541, S543, E545, E550, D579, N581, D583, K585, and E590. The disordered stretch occupies residues 606–625 (QDENIRRRSTGRPSVAKTAT).

Belongs to the PPP phosphatase family. Requires Mn(2+) as cofactor. In terms of tissue distribution, expressed in the visual system of the fly, as well as in the mushroom bodies of the central brain.

The catalysed reaction is O-phospho-L-seryl-[protein] + H2O = L-seryl-[protein] + phosphate. It carries out the reaction O-phospho-L-threonyl-[protein] + H2O = L-threonyl-[protein] + phosphate. Phosphatase required to prevent light-induced retinal degeneration. The chain is Serine/threonine-protein phosphatase rdgC (rdgC) from Drosophila melanogaster (Fruit fly).